Consider the following 1756-residue polypeptide: Transposon Ty1-PR2 Gag-Pol polyprotein (1756 aa).

3 stretches are compositionally biased toward polar residues: residues 1–10, 48–60, and 127–152; these read MESQQLSNYP, TKAN…TPAS, and QSQF…GNTF. 3 disordered regions span residues 1-93, 126-173, and 352-421; these read MESQ…MMTQ, PQSQ…RPPP, and GSRN…SKST. Positions 153 to 165 are enriched in low complexity; that stretch reads TDSSSADSDMTST. Positions 299–401 are RNA-binding; it reads NNGIHINNKV…NSKSKTARAH (103 aa). Residues 402-418 show a composition bias toward low complexity; that stretch reads NVSTSNNSPSTDNDSIS. The active-site For protease activity; shared with dimeric partner is the aspartate 461. Residues 583–640 are integrase-type zinc finger-like; it reads NVHTSESTRKYPYPFIHRMLAHANAQTIRYSLKNNTITYFNESDVDWSSAIDYQCPDC. One can recognise an Integrase catalytic domain in the interval 660–836; the sequence is NSYEPFQYLH…AGLDISTLLP (177 aa). Mg(2+) contacts are provided by aspartate 671 and aspartate 736. Disordered regions lie at residues 957–1088, 1093–1112, and 1131–1188; these read SKAV…ETEK, RSPS…NIVP, and DLPL…DNET. The span at 961 to 970 shows a compositional bias: low complexity; the sequence is SPTDSTPPST. Residues 1006–1016 are compositionally biased toward polar residues; sequence STPQISNIEST. Residues 1039–1054 are compositionally biased toward basic and acidic residues; that stretch reads ESSHASKSKDFRHSDS. Composition is skewed to polar residues over residues 1055-1083 and 1102-1112; these read YSEN…QISD and PENNSSHNIVP. Positions 1179–1213 match the Bipartite nuclear localization signal motif; it reads KKRSLEDNETEIKVSRDTWNTKNMRSLEPPRSKKR. The Reverse transcriptase Ty1/copia-type domain occupies 1339–1477; that stretch reads NNYYITQLDI…DILGLEIKYQ (139 aa). Mg(2+)-binding residues include aspartate 1347, aspartate 1428, aspartate 1429, aspartate 1611, glutamate 1653, and aspartate 1686. The region spanning 1611 to 1753 is the RNase H Ty1/copia-type domain; it reads DASYGNQPYY…IKTFKLLTNK (143 aa).

In terms of assembly, the capsid protein forms a homotrimer, from which the VLPs are assembled. The protease is a homodimer, whose active site consists of two apposed aspartic acid residues. Post-translationally, initially, virus-like particles (VLPs) are composed of the structural unprocessed proteins Gag and Gag-Pol, and also contain the host initiator methionine tRNA (tRNA(i)-Met) which serves as a primer for minus-strand DNA synthesis, and a dimer of genomic Ty RNA. Processing of the polyproteins occurs within the particle and proceeds by an ordered pathway, called maturation. First, the protease (PR) is released by autocatalytic cleavage of the Gag-Pol polyprotein yielding capsid protein p45 and a Pol-p154 precursor protein. This cleavage is a prerequisite for subsequent processing of Pol-p154 at the remaining sites to release the mature structural and catalytic proteins. Maturation takes place prior to the RT reaction and is required to produce transposition-competent VLPs.

The protein resides in the cytoplasm. Its subcellular location is the nucleus. The enzyme catalyses DNA(n) + a 2'-deoxyribonucleoside 5'-triphosphate = DNA(n+1) + diphosphate. The catalysed reaction is Endonucleolytic cleavage to 5'-phosphomonoester.. In terms of biological role, capsid protein (CA) is the structural component of the virus-like particle (VLP), forming the shell that encapsulates the retrotransposons dimeric RNA genome. The particles are assembled from trimer-clustered units and there are holes in the capsid shells that allow for the diffusion of macromolecules. CA also has nucleocapsid-like chaperone activity, promoting primer tRNA(i)-Met annealing to the multipartite primer-binding site (PBS), dimerization of Ty1 RNA and initiation of reverse transcription. The aspartyl protease (PR) mediates the proteolytic cleavages of the Gag and Gag-Pol polyproteins after assembly of the VLP. Its function is as follows. Reverse transcriptase/ribonuclease H (RT) is a multifunctional enzyme that catalyzes the conversion of the retro-elements RNA genome into dsDNA within the VLP. The enzyme displays a DNA polymerase activity that can copy either DNA or RNA templates, and a ribonuclease H (RNase H) activity that cleaves the RNA strand of RNA-DNA heteroduplexes during plus-strand synthesis and hydrolyzes RNA primers. The conversion leads to a linear dsDNA copy of the retrotransposon that includes long terminal repeats (LTRs) at both ends. Functionally, integrase (IN) targets the VLP to the nucleus, where a subparticle preintegration complex (PIC) containing at least integrase and the newly synthesized dsDNA copy of the retrotransposon must transit the nuclear membrane. Once in the nucleus, integrase performs the integration of the dsDNA into the host genome. This chain is Transposon Ty1-PR2 Gag-Pol polyprotein (TY1B-PR2), found in Saccharomyces cerevisiae (strain ATCC 204508 / S288c) (Baker's yeast).